A 309-amino-acid polypeptide reads, in one-letter code: Putative lipid kinase YtlR (309 aa).

The DAGKc domain maps to 1–134 (MSHWFFIINP…FHLGSVNFLQ (134 aa)). Residues 9 to 13 (NPTAG), threonine 40, and 69 to 75 (GDGTMHE) each bind ATP. Mg(2+) contacts are provided by asparagine 229, glutamate 232, and threonine 234. Glutamate 289 (proton acceptor) is an active-site residue.

This sequence belongs to the diacylglycerol/lipid kinase family. The cofactor is Mg(2+).

May catalyze the ATP-dependent phosphorylation of lipids other than diacylglycerol (DAG). In fact, is not able to exhibit diacylglycerol kinase activity in vitro. In Bacillus subtilis (strain 168), this protein is Putative lipid kinase YtlR (ytlR).